Consider the following 141-residue polypeptide: Vasotocin-neurophysin VT (141 aa).

A disulfide bridge connects residues Cys1 and Cys6. Gly9 is modified (glycine amide). 7 disulfides stabilise this stretch: Cys22-Cys66, Cys25-Cys39, Cys33-Cys56, Cys40-Cys46, Cys73-Cys85, Cys79-Cys97, and Cys86-Cys91. Residue Asn117 is glycosylated (N-linked (GlcNAc...) asparagine).

Belongs to the vasopressin/oxytocin family. Seven disulfide bonds are present in neurophysin.

It is found in the secreted. Vasotocin is an antidiuretic hormone. The polypeptide is Vasotocin-neurophysin VT (Pelophylax lessonae (Pool frog)).